A 550-amino-acid chain; its full sequence is Methionine--tRNA ligase (550 aa).

The 'HIGH' region signature appears at 13–23 (PYANGEIHLGH). Zn(2+)-binding residues include C144, C147, C157, and C160. The short motif at 329–333 (KMSKS) is the 'KMSKS' region element. K332 is a binding site for ATP.

It belongs to the class-I aminoacyl-tRNA synthetase family. MetG type 1 subfamily. In terms of assembly, monomer. Zn(2+) serves as cofactor.

It is found in the cytoplasm. The catalysed reaction is tRNA(Met) + L-methionine + ATP = L-methionyl-tRNA(Met) + AMP + diphosphate. Its function is as follows. Is required not only for elongation of protein synthesis but also for the initiation of all mRNA translation through initiator tRNA(fMet) aminoacylation. This Ruthia magnifica subsp. Calyptogena magnifica protein is Methionine--tRNA ligase.